The following is a 347-amino-acid chain: Heat-inducible transcription repressor HrcA (347 aa).

This sequence belongs to the HrcA family.

In terms of biological role, negative regulator of class I heat shock genes (grpE-dnaK-dnaJ and groELS operons). Prevents heat-shock induction of these operons. This is Heat-inducible transcription repressor HrcA from Mycobacterium sp. (strain JLS).